We begin with the raw amino-acid sequence, 253 residues long: Probable transcriptional regulatory protein Mlut_12910 (253 aa).

This sequence belongs to the TACO1 family.

Its subcellular location is the cytoplasm. This chain is Probable transcriptional regulatory protein Mlut_12910, found in Micrococcus luteus (strain ATCC 4698 / DSM 20030 / JCM 1464 / CCM 169 / CCUG 5858 / IAM 1056 / NBRC 3333 / NCIMB 9278 / NCTC 2665 / VKM Ac-2230) (Micrococcus lysodeikticus).